The chain runs to 225 residues: Uridylate kinase (225 aa).

Position 9–10 (9–10 (GS)) interacts with ATP. Glycine 46 contributes to the UMP binding site. Positions 47 and 51 each coordinate ATP. UMP contacts are provided by residues aspartate 67 and 115-121 (THPAHTT). Residues threonine 141, asparagine 142, tyrosine 147, and aspartate 150 each contribute to the ATP site.

This sequence belongs to the UMP kinase family. In terms of assembly, homohexamer.

The protein resides in the cytoplasm. The catalysed reaction is UMP + ATP = UDP + ADP. It functions in the pathway pyrimidine metabolism; CTP biosynthesis via de novo pathway; UDP from UMP (UMPK route): step 1/1. Inhibited by UTP. Catalyzes the reversible phosphorylation of UMP to UDP. This chain is Uridylate kinase, found in Methanococcus maripaludis (strain C7 / ATCC BAA-1331).